A 99-amino-acid polypeptide reads, in one-letter code: Small ribosomal subunit protein eS24 (99 aa).

Belongs to the eukaryotic ribosomal protein eS24 family.

The polypeptide is Small ribosomal subunit protein eS24 (rps2e) (Thermoplasma volcanium (strain ATCC 51530 / DSM 4299 / JCM 9571 / NBRC 15438 / GSS1)).